Consider the following 381-residue polypeptide: Sulfate adenylyltransferase (381 aa).

This sequence belongs to the sulfate adenylyltransferase family.

The enzyme catalyses sulfate + ATP + H(+) = adenosine 5'-phosphosulfate + diphosphate. It functions in the pathway sulfur metabolism; hydrogen sulfide biosynthesis; sulfite from sulfate: step 1/3. In Chloroflexus aurantiacus (strain ATCC 29366 / DSM 635 / J-10-fl), this protein is Sulfate adenylyltransferase.